Consider the following 188-residue polypeptide: MNMTKGALILSLSFLLAACSSIPQNIKGNNQPDIQKSFVAVHNQPGLYVGQQARFGGKVINVINGKTDTLLEISVLPLDSYAKPDIEANYQGRLLARQSGFLDPVNYRNHFVTILGTIQGEQPGFINKVPYNFLEVNMQGIQVWHLREVVNTTYNLWDYGYGAFWPEPGWGAPYYTNAVSQVTPELVK.

A signal peptide spans 1-18; the sequence is MNMTKGALILSLSFLLAA. The N-palmitoyl cysteine moiety is linked to residue cysteine 19. Residue cysteine 19 is the site of S-diacylglycerol cysteine attachment.

As to quaternary structure, forms homooligomers.

Its subcellular location is the cell outer membrane. In terms of biological role, the induction of Slp may help to stabilize the outer membrane during carbon starvation and stationary phase. This Escherichia coli (strain K12) protein is Outer membrane protein Slp (slp).